Reading from the N-terminus, the 242-residue chain is Probable transcriptional regulatory protein lp_2253 (242 aa).

Positions 1 to 21 (MSGHSKWHNIQGRKNAQDAKR) are disordered.

It belongs to the TACO1 family.

It localises to the cytoplasm. The chain is Probable transcriptional regulatory protein lp_2253 from Lactiplantibacillus plantarum (strain ATCC BAA-793 / NCIMB 8826 / WCFS1) (Lactobacillus plantarum).